A 293-amino-acid chain; its full sequence is Elongation factor Ts (293 aa).

Residues 81-84 (TDFV) are involved in Mg(2+) ion dislocation from EF-Tu.

It belongs to the EF-Ts family.

The protein localises to the cytoplasm. In terms of biological role, associates with the EF-Tu.GDP complex and induces the exchange of GDP to GTP. It remains bound to the aminoacyl-tRNA.EF-Tu.GTP complex up to the GTP hydrolysis stage on the ribosome. The chain is Elongation factor Ts from Teredinibacter turnerae (strain ATCC 39867 / T7901).